A 211-amino-acid polypeptide reads, in one-letter code: MKGKFIVFEGIDGSGKTTQINQLSKWLISTDLIPENNKLVITREPGGTQLGKSIRSLLLDTSIEKSPDSITELLLYAADRSQHVNEIIRPTLDQGDWVISDRFCGSTLAYQGYGRKLDITLIKDLEAIATQGIAPDITFLLDIPIEESIRRRRNRKDDRIEKEGREFLSNVSLGFQALSEDSHWKKISAIDSKEKIISEIKSEIKKLIKNK.

10–17 (GIDGSGKT) provides a ligand contact to ATP.

It belongs to the thymidylate kinase family.

It catalyses the reaction dTMP + ATP = dTDP + ADP. Functionally, phosphorylation of dTMP to form dTDP in both de novo and salvage pathways of dTTP synthesis. This chain is Thymidylate kinase, found in Prochlorococcus marinus (strain NATL1A).